A 273-amino-acid polypeptide reads, in one-letter code: ATP synthase subunit a (273 aa).

Transmembrane regions (helical) follow at residues 44-64, 104-124, 149-169, 223-243, and 244-264; these read WHID…WLFY, IAPL…MDLI, DLNV…FYSI, LIFI…SVPW, and AIFH…LTIV.

Belongs to the ATPase A chain family. F-type ATPases have 2 components, CF(1) - the catalytic core - and CF(0) - the membrane proton channel. CF(1) has five subunits: alpha(3), beta(3), gamma(1), delta(1), epsilon(1). CF(0) has three main subunits: a(1), b(2) and c(9-12). The alpha and beta chains form an alternating ring which encloses part of the gamma chain. CF(1) is attached to CF(0) by a central stalk formed by the gamma and epsilon chains, while a peripheral stalk is formed by the delta and b chains.

It is found in the cell inner membrane. Key component of the proton channel; it plays a direct role in the translocation of protons across the membrane. The sequence is that of ATP synthase subunit a from Shewanella putrefaciens (strain CN-32 / ATCC BAA-453).